The chain runs to 250 residues: uncharacterized protein (250 aa).

Lys17 is covalently cross-linked (Glycyl lysine isopeptide (Lys-Gly) (interchain with G-Cter in ubiquitin)). A disordered region spans residues 30 to 67; it reads REEDYVATSKDNIHHHPCDWSAKPSQRQNENEQKSTIR.

This is an uncharacterized protein from Saccharomyces cerevisiae (strain ATCC 204508 / S288c) (Baker's yeast).